A 1068-amino-acid polypeptide reads, in one-letter code: WD repeat-containing protein on Y chromosome (1068 aa).

WD repeat units follow at residues 155–199, 201–242, 322–361, 365–404, 455–494, 507–546, and 594–634; these read DEVT…IRTA, SESI…RGPF, RIPL…EPSA, GHNG…LLQT, THAA…RKII, IIDI…VVRN, and FHTD…RRYS. The segment at 657–687 is disordered; it reads SKRLASRPTPGNHGLQMGRAGRSTVLNRPED. 2 WD repeats span residues 746-785 and 829-868; these read KTGD…VPET and GHLK…LGTL. The tract at residues 1026–1068 is disordered; it reads SAINIKQPSRRRSDKTNDTRNVRTPRARDLIALEMSSSHASQS. Residues 1039-1056 show a composition bias toward basic and acidic residues; that stretch reads DKTNDTRNVRTPRARDLI.

The polypeptide is WD repeat-containing protein on Y chromosome (Drosophila yakuba (Fruit fly)).